We begin with the raw amino-acid sequence, 291 residues long: Transcription initiation factor IIE subunit beta (291 aa).

M1 is modified (N-acetylmethionine). Residues 1–13 (MDPSLLRERELFK) are compositionally biased toward basic and acidic residues. The tract at residues 1-63 (MDPSLLRERE…NSDHSNGSFN (63 aa)) is disordered. The span at 50 to 62 (GSKQNSDHSNGSF) shows a compositional bias: polar residues. S61 is subject to Phosphoserine. Residues 66–146 (ALSGSSGYKF…YAFKPKYNVR (81 aa)) constitute a DNA-binding region (TFIIE beta). At K74 the chain carries N6-acetyllysine. Residues 243-272 (SSMQESGPKKVAPIQRRKKPASQKKRRFKT) form a disordered region. Over residues 257-271 (QRRKKPASQKKRRFK) the composition is skewed to basic residues.

It belongs to the TFIIE beta subunit family. As to quaternary structure, tetramer of two alpha and two beta chains. Interacts with FACT subunit SUPT16H. Interacts with ATF7IP. Interacts with SND1. Part of TBP-based Pol II pre-initiation complex (PIC), in which Pol II core assembles with general transcription factors and other specific initiation factors including GTF2E1, GTF2E2, GTF2F1, GTF2F2, TCEA1, ERCC2, ERCC3, GTF2H2, GTF2H3, GTF2H4, GTF2H5, GTF2A1, GTF2A2, GTF2B and TBP; this large multi-subunit PIC complex mediates DNA unwinding and targets Pol II core to the transcription start site where the first phosphodiester bond forms.

The protein localises to the nucleus. Recruits TFIIH to the initiation complex and stimulates the RNA polymerase II C-terminal domain kinase and DNA-dependent ATPase activities of TFIIH. Both TFIIH and TFIIE are required for promoter clearance by RNA polymerase. This chain is Transcription initiation factor IIE subunit beta (GTF2E2), found in Homo sapiens (Human).